The chain runs to 1521 residues: Suppressor of Ty 6 homolog (1521 aa).

The tract at residues 1-204 (MDFIDNQAEE…EGAEDDARDV (204 aa)) is disordered. Positions 26-41 (KKMKMAKDKLKKKKKV) are enriched in basic residues. Residues 26–42 (KKMKMAKDKLKKKKKVV) carry the Nuclear localization signal motif. Composition is skewed to acidic residues over residues 45 to 56 (SDEDEDDEDDEE) and 67 to 76 (ADEDDEEEDA). Basic and acidic residues predominate over residues 77 to 89 (RSEKSDRSRRSEI). Residues 90–103 (NDELDDEDLDLIDE) are compositionally biased toward acidic residues. Basic and acidic residues predominate over residues 127–149 (PIRRSNQDDDDLQSERGSDDGDK). Acidic residues predominate over residues 167 to 177 (RSEDDFIEDDG). Residues 1182–1251 (LNAGRPGGCV…EKFSILLSCK (70 aa)) enclose the S1 motif domain. Residues 1299–1388 (HPNFHNVSYE…IARFVLPMIQ (90 aa)) enclose the SH2 domain. The tract at residues 1490 to 1521 (GIRSSLSYRPTGRTGPPPSAPYQQPPQQQYYR) is disordered. Over residues 1504 to 1513 (GPPPSAPYQQ) the composition is skewed to pro residues.

Belongs to the SPT6 family. Interacts with glp-1 and lin-12.

It is found in the nucleus. Its function is as follows. Histone H3-H4 chaperone that plays a role in maintenance of chromatin structure during RNA polymerase II transcription elongation. May be required for several aspects of morphogenesis of C.briggsae, including regulation of division in the germline and gut and specification of ventral-uterine precursor cell fate. This Caenorhabditis briggsae protein is Suppressor of Ty 6 homolog (emb-5).